The sequence spans 119 residues: Large ribosomal subunit protein bL20 (119 aa).

It belongs to the bacterial ribosomal protein bL20 family.

Its function is as follows. Binds directly to 23S ribosomal RNA and is necessary for the in vitro assembly process of the 50S ribosomal subunit. It is not involved in the protein synthesizing functions of that subunit. The sequence is that of Large ribosomal subunit protein bL20 from Bordetella avium (strain 197N).